Consider the following 430-residue polypeptide: Vitamin B6 salvage pathway transcriptional repressor PtsJ (430 aa).

Residues 4–72 (GKTANEIFDS…GRNGTVIKGS (69 aa)) form the HTH gntR-type domain. The segment at residues 32 to 51 (VRELASELKVNRNTVAAAYK) is a DNA-binding region (H-T-H motif). The interval 70 to 95 (KGSPSPVALEGGDPHTPLHDLSGGNP) is disordered. Residue K282 is modified to N6-(pyridoxal phosphate)lysine.

In the C-terminal section; belongs to the class-I pyridoxal-phosphate-dependent aminotransferase family. In terms of assembly, homodimer in both apo- and holo-forms.

Functionally, acts as a transcriptional repressor of the pdxK gene, encoding a pyridoxal kinase involved in the vitamin B6 salvage pathway. Also represses transcription of its own gene. Binds to the ptsJ-pdxK intergenic region, but does not bind pdxY and pdxH promoters. Among all six B6 vitamers, only pyridoxal 5'-phosphate (PLP) clearly binds to the protein and acts as an effector molecule for PtsJ, inducing a protein conformational change that increases affinity for DNA. Thus, PLP stabilizes protein-DNA interactions, reinforcing repression. This Salmonella typhimurium (strain LT2 / SGSC1412 / ATCC 700720) protein is Vitamin B6 salvage pathway transcriptional repressor PtsJ.